The primary structure comprises 495 residues: Cobyric acid synthase (495 aa).

The 189-residue stretch at 256-444 folds into the GATase cobBQ-type domain; sequence KVNVAVVLLR…VHGILDNPSV (189 aa). Cys337 (nucleophile) is an active-site residue. The active site involves His436.

The protein belongs to the CobB/CobQ family. CobQ subfamily.

It participates in cofactor biosynthesis; adenosylcobalamin biosynthesis. Functionally, catalyzes amidations at positions B, D, E, and G on adenosylcobyrinic A,C-diamide. NH(2) groups are provided by glutamine, and one molecule of ATP is hydrogenolyzed for each amidation. The sequence is that of Cobyric acid synthase from Bacteroides fragilis (strain ATCC 25285 / DSM 2151 / CCUG 4856 / JCM 11019 / LMG 10263 / NCTC 9343 / Onslow / VPI 2553 / EN-2).